Consider the following 149-residue polypeptide: Transcriptional repressor NrdR (149 aa).

A zinc finger spans residues 3–34 (CPFCDTEETKVIDSRLVSDGYQVRRRRECGHC). An ATP-cone domain is found at 49–139 (PKIIKTDGTR…VYLSFDDIDQ (91 aa)).

Belongs to the NrdR family. It depends on Zn(2+) as a cofactor.

Its function is as follows. Negatively regulates transcription of bacterial ribonucleotide reductase nrd genes and operons by binding to NrdR-boxes. The protein is Transcriptional repressor NrdR of Haemophilus influenzae (strain PittEE).